The chain runs to 277 residues: Pantothenate synthetase (277 aa).

Residue 26 to 33 (MGNLHEGH) participates in ATP binding. His-33 (proton donor) is an active-site residue. Gln-57 is a (R)-pantoate binding site. Gln-57 provides a ligand contact to beta-alanine. 144–147 (GKKD) is a binding site for ATP. Gln-150 is a (R)-pantoate binding site. Residues Gly-173 and 181-184 (LSSR) contribute to the ATP site.

This sequence belongs to the pantothenate synthetase family. In terms of assembly, homodimer.

Its subcellular location is the cytoplasm. It carries out the reaction (R)-pantoate + beta-alanine + ATP = (R)-pantothenate + AMP + diphosphate + H(+). Its pathway is cofactor biosynthesis; (R)-pantothenate biosynthesis; (R)-pantothenate from (R)-pantoate and beta-alanine: step 1/1. Its function is as follows. Catalyzes the condensation of pantoate with beta-alanine in an ATP-dependent reaction via a pantoyl-adenylate intermediate. This is Pantothenate synthetase from Laribacter hongkongensis (strain HLHK9).